The following is a 210-amino-acid chain: Large ribosomal subunit protein uL4 (210 aa).

The segment covering 41–52 (MNNARQGTASSK) has biased composition (polar residues). Residues 41–80 (MNNARQGTASSKTRSEVRGGGRKPWRQKGTGRARAGSSRS) are disordered. The segment covering 60 to 71 (GGRKPWRQKGTG) has biased composition (basic residues).

It belongs to the universal ribosomal protein uL4 family. Part of the 50S ribosomal subunit.

Its function is as follows. One of the primary rRNA binding proteins, this protein initially binds near the 5'-end of the 23S rRNA. It is important during the early stages of 50S assembly. It makes multiple contacts with different domains of the 23S rRNA in the assembled 50S subunit and ribosome. Forms part of the polypeptide exit tunnel. This Acaryochloris marina (strain MBIC 11017) protein is Large ribosomal subunit protein uL4.